Reading from the N-terminus, the 239-residue chain is Alpha-acetolactate decarboxylase (239 aa).

This sequence belongs to the alpha-acetolactate decarboxylase family.

The enzyme catalyses (2S)-2-acetolactate + H(+) = (R)-acetoin + CO2. Its pathway is polyol metabolism; (R,R)-butane-2,3-diol biosynthesis; (R,R)-butane-2,3-diol from pyruvate: step 2/3. The enzyme is active only in the presence of branched-chain amino acids. Valine results in much higher activation than leucine or isoleucine. Converts acetolactate into acetoin. Regulates leucine and valine biosynthesis by diverting the flux of alpha-acetolactate towards acetoin when the branched-chain amino acids are present in high concentration. The sequence is that of Alpha-acetolactate decarboxylase (aldC) from Streptococcus thermophilus.